Reading from the N-terminus, the 216-residue chain is Somatotropin (216 aa).

The first 26 residues, 1-26, serve as a signal peptide directing secretion; it reads MAAGPRTSMLLAFALLCLPWTQEVGA. Residue H45 coordinates Zn(2+). A disulfide bridge links C78 with C189. The residue at position 131 (S131) is a Phosphoserine. Residue E198 coordinates Zn(2+). C206 and C214 are joined by a disulfide.

It belongs to the somatotropin/prolactin family.

It is found in the secreted. Plays an important role in growth control. Its major role in stimulating body growth is to stimulate the liver and other tissues to secrete IGF1. It stimulates both the differentiation and proliferation of myoblasts. It also stimulates amino acid uptake and protein synthesis in muscle and other tissues. The sequence is that of Somatotropin (GH1) from Balaenoptera physalus (Fin whale).